A 146-amino-acid chain; its full sequence is MLALIQRVTRASVTVDDRIVGQIGPGLLALIGVEPGDRDAQTRRLAERLLSYRVFSDDAGKMNRSLTDTNGGLLLVSQFTLAADTSSGNRPGFSTAAPPEEAERAFNQLVDICREKHRGGVETGRFGAHMVVDLVNDGPVTFLLRP.

The Gly-cisPro motif, important for rejection of L-amino acids signature appears at 138–139 (GP).

It belongs to the DTD family. As to quaternary structure, homodimer.

Its subcellular location is the cytoplasm. The catalysed reaction is glycyl-tRNA(Ala) + H2O = tRNA(Ala) + glycine + H(+). It carries out the reaction a D-aminoacyl-tRNA + H2O = a tRNA + a D-alpha-amino acid + H(+). In terms of biological role, an aminoacyl-tRNA editing enzyme that deacylates mischarged D-aminoacyl-tRNAs. Also deacylates mischarged glycyl-tRNA(Ala), protecting cells against glycine mischarging by AlaRS. Acts via tRNA-based rather than protein-based catalysis; rejects L-amino acids rather than detecting D-amino acids in the active site. By recycling D-aminoacyl-tRNA to D-amino acids and free tRNA molecules, this enzyme counteracts the toxicity associated with the formation of D-aminoacyl-tRNA entities in vivo and helps enforce protein L-homochirality. This is D-aminoacyl-tRNA deacylase from Xanthomonas oryzae pv. oryzae (strain MAFF 311018).